A 398-amino-acid chain; its full sequence is Phosphoglycerate kinase (398 aa).

Residues 21 to 23 (DIN), R37, 60 to 63 (HQGR), R117, and R157 each bind substrate. Residues E332 and 357 to 360 (GGDT) contribute to the ATP site.

It belongs to the phosphoglycerate kinase family. Monomer.

It localises to the cytoplasm. The enzyme catalyses (2R)-3-phosphoglycerate + ATP = (2R)-3-phospho-glyceroyl phosphate + ADP. It participates in carbohydrate degradation; glycolysis; pyruvate from D-glyceraldehyde 3-phosphate: step 2/5. This chain is Phosphoglycerate kinase, found in Halobacterium salinarum (strain ATCC 29341 / DSM 671 / R1).